A 352-amino-acid polypeptide reads, in one-letter code: Threonine synthase (352 aa).

K59 bears the N6-(pyridoxal phosphate)lysine mark. Pyridoxal 5'-phosphate contacts are provided by residues N85, 185 to 189, and T314; that span reads GNAGN.

It belongs to the threonine synthase family. The cofactor is pyridoxal 5'-phosphate.

It carries out the reaction O-phospho-L-homoserine + H2O = L-threonine + phosphate. Its pathway is amino-acid biosynthesis; L-threonine biosynthesis; L-threonine from L-aspartate: step 5/5. Catalyzes the gamma-elimination of phosphate from L-phosphohomoserine and the beta-addition of water to produce L-threonine. The polypeptide is Threonine synthase (thrC) (Bacillus subtilis (strain 168)).